The following is a 125-amino-acid chain: Large ribosomal subunit protein bL12 (125 aa).

Belongs to the bacterial ribosomal protein bL12 family. Homodimer. Part of the ribosomal stalk of the 50S ribosomal subunit. Forms a multimeric L10(L12)X complex, where L10 forms an elongated spine to which 2 to 4 L12 dimers bind in a sequential fashion. Binds GTP-bound translation factors.

Its function is as follows. Forms part of the ribosomal stalk which helps the ribosome interact with GTP-bound translation factors. Is thus essential for accurate translation. The chain is Large ribosomal subunit protein bL12 from Delftia acidovorans (strain DSM 14801 / SPH-1).